A 708-amino-acid chain; its full sequence is Protein MICRORCHIDIA 5 (708 aa).

A compositionally biased stretch (polar residues) spans 1 to 11; sequence MAESGSTNPKS. Positions 1–47 are disordered; that stretch reads MAESGSTNPKSPSVVPDSTLGGLKRDLRNYHDGDDSNNLSIKKSKTT. Over residues 23 to 34 the composition is skewed to basic and acidic residues; that stretch reads LKRDLRNYHDGD. A coiled-coil region spans residues 590–665; sequence SVNLEAELQK…LENRQEGVST (76 aa). The short motif at 672–679 is the Nuclear localization signal element; sequence ARRDVTED.

Belongs to the MORC ATPase protein family. As to quaternary structure, homodimer and heterodimer. Component of an RNA-directed DNA methylation (RdDM) complex. Requires Mg(2+) as cofactor. The cofactor is Mn(2+).

The protein resides in the nucleus. Exhibits ATPase activity. Binds DNA/RNA in a non-specific manner and exhibits endonuclease activity. Probably involved in DNA repair. Involved in RNA-directed DNA methylation (RdDM) as a component of the RdDM machinery and required for gene silencing. May also be involved in the regulation of chromatin architecture to maintain gene silencing. This chain is Protein MICRORCHIDIA 5, found in Arabidopsis thaliana (Mouse-ear cress).